A 285-amino-acid chain; its full sequence is Bifunctional protein FolD (285 aa).

Residues 166–168 (GAS), serine 191, and isoleucine 232 contribute to the NADP(+) site.

The protein belongs to the tetrahydrofolate dehydrogenase/cyclohydrolase family. In terms of assembly, homodimer.

The enzyme catalyses (6R)-5,10-methylene-5,6,7,8-tetrahydrofolate + NADP(+) = (6R)-5,10-methenyltetrahydrofolate + NADPH. It carries out the reaction (6R)-5,10-methenyltetrahydrofolate + H2O = (6R)-10-formyltetrahydrofolate + H(+). It participates in one-carbon metabolism; tetrahydrofolate interconversion. Catalyzes the oxidation of 5,10-methylenetetrahydrofolate to 5,10-methenyltetrahydrofolate and then the hydrolysis of 5,10-methenyltetrahydrofolate to 10-formyltetrahydrofolate. In Edwardsiella ictaluri (strain 93-146), this protein is Bifunctional protein FolD.